Consider the following 188-residue polypeptide: ATP synthase subunit delta (188 aa).

It belongs to the ATPase delta chain family. F-type ATPases have 2 components, F(1) - the catalytic core - and F(0) - the membrane proton channel. F(1) has five subunits: alpha(3), beta(3), gamma(1), delta(1), epsilon(1). F(0) has three main subunits: a(1), b(2) and c(10-14). The alpha and beta chains form an alternating ring which encloses part of the gamma chain. F(1) is attached to F(0) by a central stalk formed by the gamma and epsilon chains, while a peripheral stalk is formed by the delta and b chains.

Its subcellular location is the cell inner membrane. F(1)F(0) ATP synthase produces ATP from ADP in the presence of a proton or sodium gradient. F-type ATPases consist of two structural domains, F(1) containing the extramembraneous catalytic core and F(0) containing the membrane proton channel, linked together by a central stalk and a peripheral stalk. During catalysis, ATP synthesis in the catalytic domain of F(1) is coupled via a rotary mechanism of the central stalk subunits to proton translocation. Functionally, this protein is part of the stalk that links CF(0) to CF(1). It either transmits conformational changes from CF(0) to CF(1) or is implicated in proton conduction. The protein is ATP synthase subunit delta of Rhizobium etli (strain ATCC 51251 / DSM 11541 / JCM 21823 / NBRC 15573 / CFN 42).